The primary structure comprises 630 residues: UvrABC system protein C (630 aa).

The interval methionine 1 to glycine 96 is disordered. Residues glutamate 9–histidine 28 are compositionally biased toward low complexity. The GIY-YIG domain occupies aspartate 52–valine 125. Positions arginine 75–arginine 91 are enriched in basic and acidic residues. Residues aspartate 234–phenylalanine 269 enclose the UVR domain.

This sequence belongs to the UvrC family. In terms of assembly, interacts with UvrB in an incision complex.

The protein resides in the cytoplasm. Its function is as follows. The UvrABC repair system catalyzes the recognition and processing of DNA lesions. UvrC both incises the 5' and 3' sides of the lesion. The N-terminal half is responsible for the 3' incision and the C-terminal half is responsible for the 5' incision. In Thermus thermophilus (strain ATCC BAA-163 / DSM 7039 / HB27), this protein is UvrABC system protein C.